Reading from the N-terminus, the 369-residue chain is 4-hydroxy-3-methylbut-2-en-1-yl diphosphate synthase (flavodoxin) (369 aa).

[4Fe-4S] cluster contacts are provided by Cys270, Cys273, Cys305, and Glu312.

This sequence belongs to the IspG family. The cofactor is [4Fe-4S] cluster.

The catalysed reaction is (2E)-4-hydroxy-3-methylbut-2-enyl diphosphate + oxidized [flavodoxin] + H2O + 2 H(+) = 2-C-methyl-D-erythritol 2,4-cyclic diphosphate + reduced [flavodoxin]. It participates in isoprenoid biosynthesis; isopentenyl diphosphate biosynthesis via DXP pathway; isopentenyl diphosphate from 1-deoxy-D-xylulose 5-phosphate: step 5/6. Functionally, converts 2C-methyl-D-erythritol 2,4-cyclodiphosphate (ME-2,4cPP) into 1-hydroxy-2-methyl-2-(E)-butenyl 4-diphosphate. This Pseudomonas putida (strain W619) protein is 4-hydroxy-3-methylbut-2-en-1-yl diphosphate synthase (flavodoxin).